Consider the following 1177-residue polypeptide: Lysylphosphatidylglycerol biosynthesis bifunctional protein LysX (1177 aa).

2 disordered regions span residues 1–40 and 61–85; these read MRRA…AKFV and VTLA…PRNR. The segment at 1-676 is phosphatidylglycerol lysyltransferase; that stretch reads MRRAGRSRQF…LLHHDGSAPD (676 aa). Low complexity predominate over residues 65–85; that stretch reads SPGSRSGSGPRSGPRLGPRNR. Transmembrane regions (helical) follow at residues 93-113, 135-155, 159-179, 189-209, 227-247, and 281-301; these read VPAA…LGSV, FPDT…ALTA, IAWL…VADI, IFGE…LVLA, AVLV…VELF, and VFLN…ATIV. The segment at 673–693 is disordered; that stretch reads SAPDVSGLRPERTDAEEARSR. Residues 677 to 1177 form a lysine--tRNA ligase region; that stretch reads VSGLRPERTD…TLPFPLAKPH (501 aa). Residues 681–693 show a composition bias toward basic and acidic residues; the sequence is RPERTDAEEARSR. The OB DNA-binding region spans 738–816; the sequence is ITVAGRILRI…SLIVTDWRMI (79 aa). 2 residues coordinate Mg(2+): Asp-1089 and Glu-1096.

The protein in the N-terminal section; belongs to the LPG synthetase family. It in the C-terminal section; belongs to the class-II aminoacyl-tRNA synthetase family. It depends on Mg(2+) as a cofactor.

It is found in the cell membrane. The catalysed reaction is tRNA(Lys) + L-lysine + ATP = L-lysyl-tRNA(Lys) + AMP + diphosphate. It catalyses the reaction L-lysyl-tRNA(Lys) + a 1,2-diacyl-sn-glycero-3-phospho-(1'-sn-glycerol) = a 1,2-diacyl-sn-glycero-3-phospho-1'-(3'-O-L-lysyl)-sn-glycerol + tRNA(Lys). In terms of biological role, catalyzes the production of L-lysyl-tRNA(Lys)transfer and the transfer of a lysyl group from L-lysyl-tRNA(Lys) to membrane-bound phosphatidylglycerol (PG), which produces lysylphosphatidylglycerol (LPG), one of the components of the bacterial membrane with a positive net charge. LPG synthesis contributes to the resistance to cationic antimicrobial peptides (CAMPs) and likely protects M.tuberculosis against the CAMPs produced by competiting microorganisms (bacteriocins). In fact, the modification of anionic phosphatidylglycerol with positively charged L-lysine results in repulsion of the peptides. This is Lysylphosphatidylglycerol biosynthesis bifunctional protein LysX (lysX) from Mycolicibacterium paratuberculosis (strain ATCC BAA-968 / K-10) (Mycobacterium paratuberculosis).